A 423-amino-acid polypeptide reads, in one-letter code: N-acylneuraminate cytidylyltransferase B (423 aa).

Substrate is bound by residues Arg30, Asn40, Arg88, Ser97, Ser99, and Gln120. The active site involves Arg178.

The protein belongs to the CMP-NeuNAc synthase family. As to quaternary structure, homotetramer.

It localises to the cytoplasm. It catalyses the reaction an N-acylneuraminate + CTP = a CMP-N-acyl-beta-neuraminate + diphosphate. It functions in the pathway amino-sugar metabolism; N-acetylneuraminate metabolism. Catalyzes the activation of 2-keto-3-deoxy-D-glycero-D-galacto-nononic acid (KDN) to cytidine 5'-monophosphate 2-keto-3-deoxy-D-glycero-D-galacto-nononic acid (CMP-KDN), a substrate required for the addition of sialic acid. Also has weak activity towards N-acetylneuraminic acid (NeuNAc) and N-glycolylneuraminic acid (Neu5Gc). The polypeptide is N-acylneuraminate cytidylyltransferase B (Danio rerio (Zebrafish)).